The primary structure comprises 145 residues: MKENFSIMFIHSIFLILIIFIYSNETIAQVTDDENCETLQSEVHITKDEYDEIGRLKRTCSGDISVTKCEGFCNSQVQPSVASTTGFSKECYCCRESYLKERHITLHHCYDADGIKLMNEENGVMEIKIREPVECKCIKCGDISQ.

The N-terminal stretch at 1-28 is a signal peptide; the sequence is MKENFSIMFIHSIFLILIIFIYSNETIA. Cystine bridges form between Cys36–Cys94, Cys60–Cys109, Cys69–Cys135, Cys73–Cys137, and Cys91–Cys140. The CTCK domain occupies 36–131; that stretch reads CETLQSEVHI…NGVMEIKIRE (96 aa).

As to quaternary structure, heterodimer of burs and pburs.

The protein localises to the secreted. Final heterodimeric neurohormone released at the end of the molting cycle, involved in the sclerotization (tanning) of the insect cuticle, melanization and wing spreading. This Apis mellifera (Honeybee) protein is Partner of bursicon (pburs).